Here is a 337-residue protein sequence, read N- to C-terminus: tRNA N6-adenosine threonylcarbamoyltransferase (337 aa).

Fe cation-binding residues include His111 and His115. Residues 134–138 (LVSGG), Asp167, Gly180, and Asn272 each bind substrate. Residue Asp300 coordinates Fe cation.

This sequence belongs to the KAE1 / TsaD family. Fe(2+) serves as cofactor.

Its subcellular location is the cytoplasm. It catalyses the reaction L-threonylcarbamoyladenylate + adenosine(37) in tRNA = N(6)-L-threonylcarbamoyladenosine(37) in tRNA + AMP + H(+). Functionally, required for the formation of a threonylcarbamoyl group on adenosine at position 37 (t(6)A37) in tRNAs that read codons beginning with adenine. Is involved in the transfer of the threonylcarbamoyl moiety of threonylcarbamoyl-AMP (TC-AMP) to the N6 group of A37, together with TsaE and TsaB. TsaD likely plays a direct catalytic role in this reaction. The chain is tRNA N6-adenosine threonylcarbamoyltransferase from Yersinia pseudotuberculosis serotype I (strain IP32953).